The primary structure comprises 2556 residues: Non-reducing polyketide synthase tazA (2556 aa).

The tract at residues 16–270 is N-terminal acylcarrier protein transacylase domain (SAT); it reads LFGPQALSFT…QAIGLRGRFH (255 aa). C143 serves as the catalytic Nucleophile; for transacylase activity. The active-site Proton donor/acceptor; for transacylase activity is the H270. The Ketosynthase family 3 (KS3) domain maps to 397-769; the sequence is EDEIAVIGMA…GSNASMIVTQ (373 aa). The malonyl-CoA:ACP transacylase (MAT) domain stretch occupies residues 876–1209; the sequence is CFGGQISRFV…WAHHCTQAPA (334 aa). The N-terminal hotdog fold stretch occupies residues 1254–1383; that stretch reads YTFVGYQDEG…GQIIFQSAAE (130 aa). One can recognise a PKS/mFAS DH domain in the interval 1254–1560; sequence YTFVGYQDEG…YSRLPKSTMS (307 aa). The interval 1257-1564 is product template (PT) domain; that stretch reads VGYQDEGKRQ…PKSTMSKMLT (308 aa). The active-site Proton acceptor; for dehydratase activity is H1285. The segment at 1408-1560 is C-terminal hotdog fold; that stretch reads DPDDVLQGRN…YSRLPKSTMS (153 aa). The active-site Proton donor; for dehydratase activity is the D1465. The tract at residues 1567 to 1621 is disordered; that stretch reads TAPSERRAQVDSPSMPASINAPPSASEQAPVEPAPQTKESAPIAEPGAGGQSNSK. Residues 1577 to 1593 are compositionally biased toward polar residues; that stretch reads DSPSMPASINAPPSASE. The 75-residue stretch at 1620–1694 folds into the Carrier domain; the sequence is SKVPGIVVEV…DVVQCVHKTL (75 aa). S1654 is subject to O-(pantetheine 4'-phosphoryl)serine. A disordered region spans residues 1700–1731; the sequence is SAAQESEGNLTPASSGTQSPRSDPVSDTSLSD. The segment covering 1702–1731 has biased composition (polar residues); it reads AQESEGNLTPASSGTQSPRSDPVSDTSLSD. Residues 1830–2107 are methyltransferase domain; sequence LEHEGRLIDI…DWTDGHLAEN (278 aa). Residues 2180–2424 form an NADPH-binding (R) domain region; sequence VTGATGSLGA…WTPVDVVAST (245 aa).

The cofactor is pantetheine 4'-phosphate.

It functions in the pathway secondary metabolite biosynthesis. Non-reducing polyketide synthase; part of the gene cluster that mediates the biosynthesis of azaterrilone A and other azaphilones, a class of fungal metabolites characterized by a highly oxygenated pyrano-quinone bicyclic core and exhibiting a broad range of bioactivities. The first step of the pathway begins with tazA that assembles one acetyl-CoA starter unit, five malonyl-CoA units, and catalyzes a series of Claisen condensations, methylation, PT-mediated cyclization, and finally releases the first hexaketide precursor through the R-domain. The tazA product then undergoes reduction on its terminal ketone and the following pyran-ring formation by yet undetermined enzyme(s). Dehydration and enoyl reduction, possibly involving the trans-enoyl reductase tazE leads to the next intermediate. TazD is predicted as an acetyltransferase and might catalyze the acetylation steps leading to the synthesis of azaterrilone A. Azaterrilone A is not the final product of the taz pathway and both the highly reducing polyketide synthase tazB and the dual enzyme tazHJ catalyze late steps of the pathway, leading to the production of the 2 final stereoisomers that contain additional polyketide modification whose structures have still to be determined. The protein is Non-reducing polyketide synthase tazA of Aspergillus terreus (strain NIH 2624 / FGSC A1156).